We begin with the raw amino-acid sequence, 282 residues long: Protoheme IX farnesyltransferase (282 aa).

The next 8 helical transmembrane spans lie at 40-60 (LVLA…FNMV), 87-107 (AVLA…AVNP), 108-128 (YVFV…TVLL), 135-157 (SVVF…ATGG), 162-184 (GVLL…STYY), 204-224 (AGVV…FLAF), 228-248 (LISA…VAVL), and 261-281 (AYRA…LLVL).

Belongs to the UbiA prenyltransferase family. Protoheme IX farnesyltransferase subfamily.

It is found in the cell membrane. The enzyme catalyses heme b + (2E,6E)-farnesyl diphosphate + H2O = Fe(II)-heme o + diphosphate. It functions in the pathway porphyrin-containing compound metabolism; heme O biosynthesis; heme O from protoheme: step 1/1. Its function is as follows. Converts heme B (protoheme IX) to heme O by substitution of the vinyl group on carbon 2 of heme B porphyrin ring with a hydroxyethyl farnesyl side group. In Thermofilum pendens (strain DSM 2475 / Hrk 5), this protein is Protoheme IX farnesyltransferase.